A 323-amino-acid chain; its full sequence is tRNA(Ile)-lysidine synthase (323 aa).

33–38 contacts ATP; it reads SGGPDS.

Belongs to the tRNA(Ile)-lysidine synthase family.

It localises to the cytoplasm. The catalysed reaction is cytidine(34) in tRNA(Ile2) + L-lysine + ATP = lysidine(34) in tRNA(Ile2) + AMP + diphosphate + H(+). Ligates lysine onto the cytidine present at position 34 of the AUA codon-specific tRNA(Ile) that contains the anticodon CAU, in an ATP-dependent manner. Cytidine is converted to lysidine, thus changing the amino acid specificity of the tRNA from methionine to isoleucine. The chain is tRNA(Ile)-lysidine synthase from Mycobacterium bovis (strain ATCC BAA-935 / AF2122/97).